The primary structure comprises 435 residues: MTQQITVIGGGLAGCEAAWQAAKRGVKVRLFEMKPNCYSEAHHLPGLSELVCSNSLRGDSLENAVGLLKEELRRLESLFMEGAEATKVPAGGALAVDRDLFSQYITSRIESHPLIEVVREEVTRIPEEGIVVLASGPLTAGLLAQEIGRLAGSYLYFYDAIAPIVAADSIDYGKAFRASRYGKGDGDDYVNCPMDEEQYQAFVREILAAEKVEPKSFEKVVHFEGCMPIEEMASRGPETLRFGPMKPVGLVDPRVGVEPHAVIQLRQENLEATMYNLVGFQTKLTWPEQKRIFRMIPGLENAQFLRLGSMHRNTFINAPELLMATCQLKSDQRIFFAGQITGVEGYVESASSGFAVGVNAARLSKGEGLVVPPAETAIGALARHITNTEAAHFQPMNVNYGLFPPLPGRIKKKEKRGLLAQRGLEALEMWLPELS.

9 to 14 (GGGLAG) is an FAD binding site.

This sequence belongs to the MnmG family. TrmFO subfamily. FAD is required as a cofactor.

The protein localises to the cytoplasm. The catalysed reaction is uridine(54) in tRNA + (6R)-5,10-methylene-5,6,7,8-tetrahydrofolate + NADH + H(+) = 5-methyluridine(54) in tRNA + (6S)-5,6,7,8-tetrahydrofolate + NAD(+). It carries out the reaction uridine(54) in tRNA + (6R)-5,10-methylene-5,6,7,8-tetrahydrofolate + NADPH + H(+) = 5-methyluridine(54) in tRNA + (6S)-5,6,7,8-tetrahydrofolate + NADP(+). Functionally, catalyzes the folate-dependent formation of 5-methyl-uridine at position 54 (M-5-U54) in all tRNAs. The protein is Methylenetetrahydrofolate--tRNA-(uracil-5-)-methyltransferase TrmFO of Geobacter sp. (strain M21).